Here is a 468-residue protein sequence, read N- to C-terminus: MSYTFDWLSKDVVKKLQGRDLRPVKCLSDATKFCLFNILQETSSRLALKTEYIPVGFTLLHLLEPNIPVPEPEVSAPIPLKHTISQKLKADLDVETIAGGEAGFVKSCGYDIEVQSKSIPNPKLESLQNRKLLDQLPTFMKTCWKDGKNLYVVTEAYEVTKDTVLEGTSNSKFAIKGIINQLVKVGGSGQWQTEKTDSIPIQKGSVLAYKKQQLVIEDNTCVILTSANTKKKMTFPMRFVGMSGHLRYQDLVIETGSWINDIDPIGTIKEPTHLDFMCLQNEVSEQTRLLAELSKDVQEVVFSSFLHMLCDRDVLYDLMKMLELNQLGHMDGPGGKILDELRKDSSLSWINLKDLILYLLQALMVLSDTQLCLLALSVEMRLLPHQVELVKSILQPNFKYPWNIPFTLQPQLLAPLQGEGLAITYELLEECGLKMELNNPRSTWDLEAKMPLSALYGSLSFLQQLSEA.

The segment at Met1–Lys230 is triggers pyroptosis.

This sequence belongs to the gasdermin family. As to quaternary structure, homooligomer; homooligomeric ring-shaped pore complex containing 27-28 subunits when inserted in the membrane. In terms of processing, cleavage by CASP8 relieves autoinhibition by releasing the N-terminal moiety (Gasdermin-C, N-terminal) that initiates pyroptosis. Post-translationally, palmitoylated.

It localises to the cytoplasm. The protein resides in the cytosol. It is found in the cell membrane. The full-length protein before cleavage is inactive: intramolecular interactions between N- and C-terminal domains mediate autoinhibition in the absence of activation signal. The intrinsic pyroptosis-inducing activity is carried by the released N-terminal moiety (Gasdermin-C, N-terminal) following cleavage by caspase CASP8. Functionally, this form constitutes the precursor of the pore-forming protein: upon cleavage, the released N-terminal moiety (Gasdermin-C, N-terminal) binds to membranes and forms pores, triggering pyroptosis. Its function is as follows. Pore-forming protein that causes membrane permeabilization and pyroptosis. Produced by the cleavage of gasdermin-C by caspase CASP8 in response to death signals. After cleavage, moves to the plasma membrane where it strongly binds to membrane inner leaflet lipids. Homooligomerizes within the membrane and forms pores of 10-15 nanometers (nm) of inner diameter, triggering pyroptosis. The chain is Gasdermin-C from Mus musculus (Mouse).